Consider the following 481-residue polypeptide: Proline--tRNA ligase (481 aa).

The protein belongs to the class-II aminoacyl-tRNA synthetase family. ProS type 3 subfamily. Homodimer.

It localises to the cytoplasm. The enzyme catalyses tRNA(Pro) + L-proline + ATP = L-prolyl-tRNA(Pro) + AMP + diphosphate. Its function is as follows. Catalyzes the attachment of proline to tRNA(Pro) in a two-step reaction: proline is first activated by ATP to form Pro-AMP and then transferred to the acceptor end of tRNA(Pro). The chain is Proline--tRNA ligase from Chlorobium phaeobacteroides (strain DSM 266 / SMG 266 / 2430).